A 407-amino-acid chain; its full sequence is 1-deoxy-D-xylulose 5-phosphate reductoisomerase (407 aa).

Threonine 25, glycine 26, serine 27, isoleucine 28, asparagine 53, and asparagine 136 together coordinate NADPH. Lysine 137 is a 1-deoxy-D-xylulose 5-phosphate binding site. Glutamate 138 contributes to the NADPH binding site. Residue aspartate 162 coordinates Mn(2+). 1-deoxy-D-xylulose 5-phosphate contacts are provided by serine 163, glutamate 164, serine 188, and histidine 211. Position 164 (glutamate 164) interacts with Mn(2+). Glycine 217 contacts NADPH. The 1-deoxy-D-xylulose 5-phosphate site is built by serine 224, asparagine 229, lysine 230, and glutamate 233. A Mn(2+)-binding site is contributed by glutamate 233.

This sequence belongs to the DXR family. Mg(2+) is required as a cofactor. The cofactor is Mn(2+).

The catalysed reaction is 2-C-methyl-D-erythritol 4-phosphate + NADP(+) = 1-deoxy-D-xylulose 5-phosphate + NADPH + H(+). The protein operates within isoprenoid biosynthesis; isopentenyl diphosphate biosynthesis via DXP pathway; isopentenyl diphosphate from 1-deoxy-D-xylulose 5-phosphate: step 1/6. In terms of biological role, catalyzes the NADPH-dependent rearrangement and reduction of 1-deoxy-D-xylulose-5-phosphate (DXP) to 2-C-methyl-D-erythritol 4-phosphate (MEP). This is 1-deoxy-D-xylulose 5-phosphate reductoisomerase from Rhodopseudomonas palustris (strain BisB5).